The chain runs to 362 residues: Histidinol-phosphate aminotransferase 1 (362 aa).

Lys-226 is subject to N6-(pyridoxal phosphate)lysine.

This sequence belongs to the class-II pyridoxal-phosphate-dependent aminotransferase family. Histidinol-phosphate aminotransferase subfamily. Homodimer. Requires pyridoxal 5'-phosphate as cofactor.

It carries out the reaction L-histidinol phosphate + 2-oxoglutarate = 3-(imidazol-4-yl)-2-oxopropyl phosphate + L-glutamate. The protein operates within amino-acid biosynthesis; L-histidine biosynthesis; L-histidine from 5-phospho-alpha-D-ribose 1-diphosphate: step 7/9. In Dechloromonas aromatica (strain RCB), this protein is Histidinol-phosphate aminotransferase 1.